An 84-amino-acid polypeptide reads, in one-letter code: Large ribosomal subunit protein eL34 (84 aa).

This sequence belongs to the eukaryotic ribosomal protein eL34 family.

The polypeptide is Large ribosomal subunit protein eL34 (Pyrobaculum islandicum (strain DSM 4184 / JCM 9189 / GEO3)).